The chain runs to 309 residues: Aspartate carbamoyltransferase catalytic subunit (309 aa).

Positions 55 and 56 each coordinate carbamoyl phosphate. K85 contributes to the L-aspartate binding site. 3 residues coordinate carbamoyl phosphate: R106, H135, and Q138. The L-aspartate site is built by R168 and R230. The carbamoyl phosphate site is built by L268 and P269.

It belongs to the aspartate/ornithine carbamoyltransferase superfamily. ATCase family. In terms of assembly, heterododecamer (2C3:3R2) of six catalytic PyrB chains organized as two trimers (C3), and six regulatory PyrI chains organized as three dimers (R2).

The enzyme catalyses carbamoyl phosphate + L-aspartate = N-carbamoyl-L-aspartate + phosphate + H(+). The protein operates within pyrimidine metabolism; UMP biosynthesis via de novo pathway; (S)-dihydroorotate from bicarbonate: step 2/3. Catalyzes the condensation of carbamoyl phosphate and aspartate to form carbamoyl aspartate and inorganic phosphate, the committed step in the de novo pyrimidine nucleotide biosynthesis pathway. This Vibrio campbellii (strain ATCC BAA-1116) protein is Aspartate carbamoyltransferase catalytic subunit.